A 1506-amino-acid chain; its full sequence is MEESQNIPPKTQTLNNSENSINNINNNNLTTTTTTTAVGNTNYKNNNRYNNNRYNRNNFNNYNNNNNNNNNNNNMVTSTTSPPTTTTTTTSTTTTATPSSNSNNRRKNYHNNNYNNNNNNNQLSEDTDEVILYTPADISASLKSESAKQQQQQQQQSLPTQEPTQTLNWQQELYKLNPKSKAFVPKPQGSVPFNNTNNNNNNNNNNNNNVPQSPIKDNNRPQRERRERKPKENNTQQPQPQQPQQPQQPQPQPQQQQQSQQQQTVKENNRKKENKLQSKKDIITNNDNIEPIKSKEDISLANKFAKNRAKENLAKTNSINNSNTANSNKIKGKTKFIFNENDEKNSEYTPLAIQMITKIQANIYECMVCFENVGKNAVIWSCSQCFTMFHSSCIKQWSSKSVTTEGKWKCPGCRYNHEVKPEHFQPACFCGKVKDPQYNPYHLAHSCGEVCGKLRAKSNCPHSCTMLCHPGPCLNCSSLGDIKDCYCGKTKYRLLCGEVDKGKVCEGKCEKLLSCGNHRCQQQCHSGSCSPCEVVETQKCYCGKHIDKTKPCGSGSIDTSQSDDDPRFFSCAEKCDRTLDCGNHKCQRTCHKGDCEPCSLVPDRVDRCNCKQTTLEELGVVRTSCLDPIPVCKKVCSTLLACKQHSCTDRCHTGPCGSCKVKVRSICRCGKTTENRQCGVIQQNMSSTSAAAFTCGNVCKILRSCKRHECGVKCCPSTSSSDEAGNHVCTLVCGKQLKCGVHKCQQLCHSGKCYNCYINSYDDLACPCGKTVIQPPVPCGTKPPMCNHPCTIKRECGHSNEVWEHKCHSGPCPPCTYLVDKMCAGGHQVQKSVKCSTIDASCGRICGKVLSCLSHTCPRICHSGPCLINNNNVNINKQQPLLPANLIASKNNYQLQQQSKLPTTTTTTTTTTSTTSTTSPKIIEKDEELIEDDNNNNNNNNNNNNNNNNNNNNNNNNNNNNNNNNNNNNNNNNNNNNNNNEKAEITNECNHDHDHEHEHSDDENSEEEVDLNECNHNHECNEEEERIKKEEKEDDEDEDELFDSLMGNLTCGYLCGIPLKSCEHTCHQACHPGEPCPTNISCKQKVRIYCKCKRRSVETLCCGKDDTRQLECDEVCEKEEREKQLKEAFYGSHTLDNNPNNPNNPNNPNNNTTTTTTTTTTTTSSPTNFTVLDPTSIDYQPNKLQIEALQLIAKASPKLIKKIEAIYEDFINSNLLKQTIKYTDSIQLFLLVQMAKFYQMKYREKKPLNYIEFFKKTSYQIPSPRLSEMVGINGSSLSSGTISNSLSFSINNGQSYASISLSPSEMVAQAQAQAELENQCPALLFKNLDPSIKTDHLTNLLQEFEGRYKLMWVDDSNCLAIFGDSISFSMASQIKTMFTYEIYQDDPSLIDITFGNSVLSTPTSSSGSNSGVSSPLSYLSPLKKSQDTQFFRVSQQMNKFSFLDTINQNQNQNNNNNNNNNNNNNSNINIKPTIPLYSTSTANANRMLRRSNENTGENVADDWENL.

Over residues 1-12 (MEESQNIPPKTQ) the composition is skewed to polar residues. Disordered stretches follow at residues 1–123 (MEES…NNQL), 142–164 (LKSESAKQQQQQQQQSLPTQEPT), and 181–282 (KAFV…KKDI). 2 stretches are compositionally biased toward low complexity: residues 13 to 103 (TLNN…SNSN) and 110 to 121 (HNNNYNNNNNNN). Residues 194-209 (NNTNNNNNNNNNNNNN) are compositionally biased toward low complexity. The span at 217–232 (DNNRPQRERRERKPKE) shows a compositional bias: basic and acidic residues. Pro residues predominate over residues 240 to 252 (PQQPQQPQQPQPQ). Residues 253–263 (PQQQQQSQQQQ) are compositionally biased toward low complexity. Residues 267–282 (ENNRKKENKLQSKKDI) show a composition bias toward basic and acidic residues. The segment at 363-416 (IYECMVCFENVGKNAVIWSCSQCFTMFHSSCIKQWSSKSVTTEGKWKCPGCRYN) adopts a PHD-type zinc-finger fold. The segment at 366–414 (CMVCFENVGKNAVIWSCSQCFTMFHSSCIKQWSSKSVTTEGKWKCPGCR) adopts an RING-type; degenerate zinc-finger fold. NF-X1-type zinc fingers lie at residues 460-478 (CPHSCTMLCHPGPCLNCSS), 515-534 (CGNHRCQQQCHSGSCSPCEV), 581-600 (CGNHKCQRTCHKGDCEPCSL), 642-661 (CKQHSCTDRCHTGPCGSCKV), 739-758 (CGVHKCQQLCHSGKCYNCYI), 796-817 (CGHSNEVWEHKCHSGPCPPCTY), and 852-868 (CLSHTCPRICHSGPCLI). Disordered regions lie at residues 897–1012 (QQSK…VDLN) and 1021–1040 (NEEEERIKKEEKEDDEDEDE). Positions 903–921 (TTTTTTTTTTSTTSTTSPK) are enriched in low complexity. Positions 925–934 (KDEELIEDDN) are enriched in acidic residues. Over residues 935–980 (NNNNNNNNNNNNNNNNNNNNNNNNNNNNNNNNNNNNNNNNNNNNNN) the composition is skewed to low complexity. 2 stretches are compositionally biased toward basic and acidic residues: residues 981–1002 (EKAEITNECNHDHDHEHEHSDD) and 1021–1031 (NEEEERIKKEE). The segment at 1062–1084 (CEHTCHQACHPGEPCPTNISCKQ) adopts an NF-X1-type 8 zinc-finger fold. Disordered stretches follow at residues 1132 to 1167 (SHTLDNNPNNPNNPNNPNNNTTTTTTTTTTTTSSPT) and 1447 to 1473 (NQNQNQNNNNNNNNNNNNNSNINIKPT). 2 stretches are compositionally biased toward low complexity: residues 1137-1167 (NNPNNPNNPNNPNNNTTTTTTTTTTTTSSPT) and 1447-1470 (NQNQNQNNNNNNNNNNNNNSNINI).

It belongs to the NFX1 family.

It is found in the nucleus. Its function is as follows. May play a role in transcription regulation. The protein is Transcriptional repressor NF-X1 homolog (nfx1) of Dictyostelium discoideum (Social amoeba).